Consider the following 212-residue polypeptide: Ropporin-1 (212 aa).

The RIIa domain maps to 12–43 (PELPELLKQFTKDAIRTQPPDLIQWAAEYFGA). Residue serine 56 is modified to Phosphoserine. The segment at 209-212 (VRLE) is interaction with RHPN1.

This sequence belongs to the ropporin family. Homodimer. Interacts with AKAP3. May interact with SPA17. Interacts with RHPN1. Interacts with FSCB; the interaction increases upon spermatozoa capacitation conditions. Interacts with CFAP61. Sumoylated, sumoylation decreases upon spermatozoa capacitation conditions. As to expression, testis-specific. Present in the most inner parts of seminiferous tubules (at protein level).

The protein localises to the cell projection. Its subcellular location is the cilium. It localises to the flagellum. Functionally, important for male fertility. With ROPN1L, involved in fibrous sheath integrity and sperm motility, plays a role in PKA-dependent signaling processes required for spermatozoa capacitation. The chain is Ropporin-1 (Ropn1) from Mus musculus (Mouse).